The sequence spans 512 residues: Sucrose transport protein SUC5 (512 aa).

Residues 1–27 are disordered; the sequence is MGALEAERAANNATALETQSSPEDLGQ. Over 1–33 the chain is Cytoplasmic; the sequence is MGALEAERAANNATALETQSSPEDLGQPSPLRK. A compositionally biased stretch (polar residues) spans 11-22; sequence NNATALETQSSP. Serine 20 carries the post-translational modification Phosphoserine. Residues 34 to 54 traverse the membrane as a helical segment; it reads IISVASIAAGVQFGWALQLSL. Topologically, residues 55–67 are extracellular; the sequence is LTPYIQLLGIPHK. A helical transmembrane segment spans residues 68–88; the sequence is WSSYMWLCGPISGMIVQPIVG. Residues 89-102 are Cytoplasmic-facing; that stretch reads YHSDRCESRFGRRR. Residues 103–123 form a helical membrane-spanning segment; sequence PFIAAGVALVAVSVFLIGFAA. Over 124 to 140 the chain is Extracellular; the sequence is DMGHSFGDKLENKVRTR. The chain crosses the membrane as a helical span at residues 141–161; sequence AIIIFLTGFWFLDVANNTLQG. The Cytoplasmic portion of the chain corresponds to 162–179; it reads PCRAFLADLAAGDAKKTR. The helical transmembrane segment at 180–200 threads the bilayer; the sequence is VANACFSFFMAVGNVLGYAAG. Residues 201-225 are Extracellular-facing; sequence SYTNLHKMFPFTMTKACDIYCANLK. The chain crosses the membrane as a helical span at residues 226–246; it reads TCFFLSITLLLIVTFSSLWYV. Residues 247–281 lie on the Cytoplasmic side of the membrane; it reads KDKQWSPPQGDKEEKTSSLFFFGEIFGAVRHMKRP. A helical membrane pass occupies residues 282–302; sequence MVMLLIVTVINWIAWFPFILY. Topologically, residues 303–333 are extracellular; that stretch reads DTDWMGREVYGGNSDGDERSKKLYDQGVQAG. The chain crosses the membrane as a helical span at residues 334 to 354; the sequence is ALGLMFNSILLGFVSLGVESI. The Cytoplasmic portion of the chain corresponds to 355–363; the sequence is GRKMGGAKR. Residues 364 to 384 traverse the membrane as a helical segment; it reads LWGCVNFILAIGLAMTVLVTK. The Extracellular segment spans residues 385–406; sequence SAEHHREIAGPLAGPSSGIKAG. A helical membrane pass occupies residues 407 to 427; it reads VFSLFTVLGIPLAITYSIPFA. At 428–440 the chain is on the cytoplasmic side; the sequence is LASIFSTNSGAGQ. Residues 441 to 461 form a helical membrane-spanning segment; the sequence is GLSLGVLNIAICIPQMIVSFS. Residues 462-473 lie on the Extracellular side of the membrane; sequence SGPLDAQFGGGN. A helical transmembrane segment spans residues 474 to 494; that stretch reads LPSFVVGAIAAAVSGVLALTV. Over 495-512 the chain is Cytoplasmic; that stretch reads LPSPPPDAPAMSGAMGFH.

The protein belongs to the glycoside-pentoside-hexuronide (GPH) cation symporter transporter (TC 2.A.2.4) family. In terms of tissue distribution, widely expressed. Expressed in the endosperm and on the epidermis of the outer surface of the cotyledons of torpedo-stage or older embryos.

Its subcellular location is the cell membrane. It carries out the reaction sucrose(out) + H(+)(out) = sucrose(in) + H(+)(in). Its pathway is glycan biosynthesis; sucrose metabolism. With respect to regulation, inhibited by protonophores (e.g. carbonyl cyanide m-chlorophenyl-hydrazone (CCCP)) and SH group inhibitors (e.g. p-chloromercuribenzene sulphonic acid (PCMBS)). Functionally, responsible in a heterologous system for the transport of sucrose into the cell, with the concomitant uptake of protons (symport system). Can also transport biotin, and probably maltose at a lesser rate. In planta, the role of SUC5 for the transport of sucrose seems to be negligible. Plays a role in the nutrition of the filial tissues during early seed development and is probably involved in the import of biotin into the endosperm and the embryo epidermis. This chain is Sucrose transport protein SUC5, found in Arabidopsis thaliana (Mouse-ear cress).